The chain runs to 232 residues: Single-stranded DNA-binding protein (232 aa).

2 stretches are compositionally biased toward acidic residues: residues 190–200 and 216–232; these read GEDEWADEVED and EWQEDEHEETPDDDEDF. Residues 190–232 form a disordered region; sequence GEDEWADEVEDGGYTASESRQSRDEQEWQEDEHEETPDDDEDF. A dimerization and interaction with the viral DNA polymerase and helicase region spans residues 213–232; the sequence is DEQEWQEDEHEETPDDDEDF.

Belongs to the Teseptimavirus single-stranded DNA-binding protein family. As to quaternary structure, homodimer. Interacts (via C-terminus) with the viral DNA polymerase. Interacts with the viral helicase/primase. Part of the replicase complex that includes the DNA polymerase, the primase/helicase and the single-stranded DNA binding protein.

Single-stranded DNA-binding protein that participates in viral DNA replication, formation of concatemers, recombination and repair of double-stranded breaks. Coats the lagging-strand ssDNA as the replication fork advances and stimulates the activities of viral DNA polymerase and primase/helicase. Coordinates simultaneous synthesis of leading- and lagging-strands. Together with DNA primase/helicase, promotes pairing of two homologous DNA molecules containing complementary single-stranded regions and mediates homologous DNA strand exchange. Also promotes the formation of joint molecules. Disrupts loops, hairpins and other secondary structures present on ssDNA to reduce and eliminate pausing of viral DNA polymerase at specific sites during elongation. This is Single-stranded DNA-binding protein (2.5) from Enterobacteria phage T3 (Bacteriophage T3).